Consider the following 184-residue polypeptide: Orotate phosphoribosyltransferase (184 aa).

Residues R99, K100, K103, H105, and 125–133 (EDTTTTGNS) contribute to the 5-phospho-alpha-D-ribose 1-diphosphate site. 2 residues coordinate orotate: T129 and R157.

This sequence belongs to the purine/pyrimidine phosphoribosyltransferase family. PyrE subfamily. In terms of assembly, homodimer. The cofactor is Mg(2+).

The enzyme catalyses orotidine 5'-phosphate + diphosphate = orotate + 5-phospho-alpha-D-ribose 1-diphosphate. The protein operates within pyrimidine metabolism; UMP biosynthesis via de novo pathway; UMP from orotate: step 1/2. Functionally, catalyzes the transfer of a ribosyl phosphate group from 5-phosphoribose 1-diphosphate to orotate, leading to the formation of orotidine monophosphate (OMP). The chain is Orotate phosphoribosyltransferase from Corynebacterium glutamicum (strain ATCC 13032 / DSM 20300 / JCM 1318 / BCRC 11384 / CCUG 27702 / LMG 3730 / NBRC 12168 / NCIMB 10025 / NRRL B-2784 / 534).